The sequence spans 312 residues: MRMLLALLALSAARPSASAESHWCYEVQAESSNYPCLVPVKWGGNCQKDRQSPINIVTTKAKVDKKLGRFFFSGYDKKQTWTVQNNGHSVMMLLENKASISGGGLPAPYQAKQLHLHWSDLPYKGSEHSLDGEHFAMEMHIVHEKEKGTSRNVKEAQDPEDEIAVLAFLVEAGTQVNEGFQPLVEALSNIPKPEMSTTMAESSLLDLLPKEEKLRHYFRYLGSLTTPTCDEKVVWTVFREPIQLHREQILAFSQKLYYDKEQTVSMKDNVRPLQQLGQRTVIKSGAPGRPLPWALPALLGPMLACLLAGFLR.

A signal peptide spans 1 to 18 (MRMLLALLALSAARPSAS). Residues 21–285 (SHWCYEVQAE…LGQRTVIKSG (265 aa)) enclose the Alpha-carbonic anhydrase domain. Cystine bridges form between C24–C36 and C46–C229. H88 functions as the Proton donor/acceptor in the catalytic mechanism. Zn(2+) contacts are provided by H115, H117, and H140. 225–226 (TT) serves as a coordination point for substrate. A lipid anchor (GPI-anchor amidated serine) is attached at S284. Positions 285–312 (GAPGRPLPWALPALLGPMLACLLAGFLR) are cleaved as a propeptide — removed in mature form.

It belongs to the alpha-carbonic anhydrase family. In terms of assembly, interacts with SLC4A4. Requires Zn(2+) as cofactor. As to expression, expressed in the endothelium of the choriocapillaris in eyes (at protein level). Not expressed in the retinal epithelium at detectable levels.

It localises to the cell membrane. It carries out the reaction hydrogencarbonate + H(+) = CO2 + H2O. Activated by histamine, L-adrenaline, D-phenylalanine, L- and D-histidine. Inhibited by coumarins, saccharin, sulfonamide derivatives such as acetazolamide and Foscarnet (phosphonoformate trisodium salt). Catalyzes the reversible hydration of carbon dioxide into bicarbonate and protons and thus is essential to maintaining intracellular and extracellular pH. May stimulate the sodium/bicarbonate transporter activity of SLC4A4 that acts in pH homeostasis. It is essential for acid overload removal from the retina and retina epithelium, and acid release in the choriocapillaris in the choroid. The polypeptide is Carbonic anhydrase 4 (Homo sapiens (Human)).